Reading from the N-terminus, the 287-residue chain is tRNA-cytidine(32) 2-sulfurtransferase (287 aa).

Residues 58–63 (SGGKDS) carry the PP-loop motif motif. Residues C133, C136, and C224 each coordinate [4Fe-4S] cluster.

Belongs to the TtcA family. In terms of assembly, homodimer. It depends on Mg(2+) as a cofactor. [4Fe-4S] cluster serves as cofactor.

The protein resides in the cytoplasm. The catalysed reaction is cytidine(32) in tRNA + S-sulfanyl-L-cysteinyl-[cysteine desulfurase] + AH2 + ATP = 2-thiocytidine(32) in tRNA + L-cysteinyl-[cysteine desulfurase] + A + AMP + diphosphate + H(+). It functions in the pathway tRNA modification. Its function is as follows. Catalyzes the ATP-dependent 2-thiolation of cytidine in position 32 of tRNA, to form 2-thiocytidine (s(2)C32). The sulfur atoms are provided by the cysteine/cysteine desulfurase (IscS) system. This chain is tRNA-cytidine(32) 2-sulfurtransferase, found in Dinoroseobacter shibae (strain DSM 16493 / NCIMB 14021 / DFL 12).